Consider the following 420-residue polypeptide: Ribosome biogenesis protein WDR12 homolog (420 aa).

The tract at residues 10 to 92 (VQVHLKTKQE…EDAIEIEYVE (83 aa)) is ubiquitin-like (UBL) domain. WD repeat units follow at residues 104 to 142 (LHDDWVSAVKARGKWILSGCYDNSLNLWTNKGKHILTIS), 143 to 185 (GHTA…NAVD), 192 to 231 (GHERGVDSVSVSPDGLRFATGSWDTMLKVWSAELDDGVEG), 250 to 288 (GHRESVSAVQWMDATTLLTGSWDYTLKVWDLSLEGIKTE), 290 to 329 (STNKSIFDASYSKLNRLILTASADKNLRLYDPRTNQGSVV), 335 to 375 (GHNA…APLY), and 379 to 417 (GHGDKVLDIDWSNPKYIVSGGVDNTVRVFKSRKALAEDT).

Belongs to the WD repeat WDR12/YTM1 family.

It is found in the nucleus. The protein resides in the nucleolus. The protein localises to the nucleoplasm. Functionally, required for maturation of ribosomal RNAs and formation of the large ribosomal subunit. The chain is Ribosome biogenesis protein WDR12 homolog from Drosophila sechellia (Fruit fly).